The primary structure comprises 193 residues: Interferon epsilon (193 aa).

The N-terminal stretch at 1-21 (MINKSFFEIMLVLLASSTGFS) is a signal peptide. Cys53 and Cys163 form a disulfide bridge. The N-linked (GlcNAc...) asparagine glycan is linked to Asn139.

This sequence belongs to the alpha/beta interferon family.

It localises to the secreted. Its function is as follows. Type I interferon required for maintaining basal levels of IFN-regulated genes, including 2'-5'-oligoadenylate synthetase, IRF7 and ISG15, in the female reproductive tract. Directly mediates protection against viral and bacterial genital infections. In Sus scrofa (Pig), this protein is Interferon epsilon (IFNE).